Here is a 594-residue protein sequence, read N- to C-terminus: TOX high mobility group box family member 4-B (594 aa).

Disordered stretches follow at residues 160–225 and 522–545; these read GTIL…PQKP and ESPP…SPQC. Residues 207–217 are compositionally biased toward basic residues; it reads KPKTPKKKKKK. The Nuclear localization signal motif lies at 212-217; sequence KKKKKK. A DNA-binding region (HMG box) is located at residues 222–290; sequence PQKPLSAYAL…EYLKALALYK (69 aa).

Component of the PNUTS-PP1 phosphatase complex.

Its subcellular location is the nucleus. It localises to the chromosome. Its function is as follows. Transcription factor that modulates cell fate reprogramming from the somatic state to the pluripotent and neuronal fate. Also acts as a regulatory component of protein phosphatase 1 (PP1) complexes. Component of the PNUTS-PP1 protein phosphatase complex, a PP1 complex that regulates RNA polymerase II transcription pause-release. PNUTS-PP1 also plays a role in the control of chromatin structure and cell cycle progression during the transition from mitosis into interphase. The chain is TOX high mobility group box family member 4-B (tox4-b) from Xenopus laevis (African clawed frog).